The chain runs to 392 residues: Lipid-A-disaccharide synthase (392 aa).

The protein belongs to the LpxB family.

The enzyme catalyses a lipid X + a UDP-2-N,3-O-bis[(3R)-3-hydroxyacyl]-alpha-D-glucosamine = a lipid A disaccharide + UDP + H(+). It functions in the pathway bacterial outer membrane biogenesis; LPS lipid A biosynthesis. Its function is as follows. Condensation of UDP-2,3-diacylglucosamine and 2,3-diacylglucosamine-1-phosphate to form lipid A disaccharide, a precursor of lipid A, a phosphorylated glycolipid that anchors the lipopolysaccharide to the outer membrane of the cell. The sequence is that of Lipid-A-disaccharide synthase from Bradyrhizobium diazoefficiens (strain JCM 10833 / BCRC 13528 / IAM 13628 / NBRC 14792 / USDA 110).